The sequence spans 37 residues: Cytochrome b6-f complex subunit 5 (37 aa).

Residues 5 to 25 (SLFGIVLGLIPITLAGLFVTA) traverse the membrane as a helical segment.

Belongs to the PetG family. In terms of assembly, the 4 large subunits of the cytochrome b6-f complex are cytochrome b6, subunit IV (17 kDa polypeptide, PetD), cytochrome f and the Rieske protein, while the 4 small subunits are PetG, PetL, PetM and PetN. The complex functions as a dimer.

The protein resides in the plastid. It localises to the chloroplast thylakoid membrane. Component of the cytochrome b6-f complex, which mediates electron transfer between photosystem II (PSII) and photosystem I (PSI), cyclic electron flow around PSI, and state transitions. PetG is required for either the stability or assembly of the cytochrome b6-f complex. The chain is Cytochrome b6-f complex subunit 5 from Arabis hirsuta (Hairy rock-cress).